Here is a 321-residue protein sequence, read N- to C-terminus: Basic leucine zipper 34 (321 aa).

The disordered stretch occupies residues 97–189 (TDDDNLHSNP…SGNRILDPKR (93 aa)). 3 stretches are compositionally biased toward low complexity: residues 110 to 133 (NNKN…NSFN), 145 to 155 (NMNNNINNNYN), and 172 to 182 (SNNNSGDSSGN). One can recognise a bZIP domain in the interval 186–238 (DPKRVKRILANRQSAQRSRVRKLQYISELERSVTSLQAEVSVLSPRVAFLDHQ). A basic motif region spans residues 188 to 207 (KRVKRILANRQSAQRSRVRK). The segment at 214–235 (LERSVTSLQAEVSVLSPRVAFL) is leucine-zipper.

As to quaternary structure, forms heterodimers with BZIP18, BZIP43 and VIP1/BZIP51. In terms of tissue distribution, expressed in vascular tissues of leaves, stems and siliques, anthers, filaments, tapetum, mature pollen grains, pistil vascular tissues and papillar cells, and funiculi.

The protein localises to the nucleus. In terms of biological role, transcriptional activator involved in the sporophytic control of cell wall patterning and gametophytic control of pollen development. May play a role in the control of metabolic pathways regulating cellular transport and lipid metabolism. This chain is Basic leucine zipper 34, found in Arabidopsis thaliana (Mouse-ear cress).